The primary structure comprises 391 residues: Thioredoxin-interacting protein (391 aa).

Lys-212 is covalently cross-linked (Glycyl lysine isopeptide (Lys-Gly) (interchain with G-Cter in ubiquitin)). Ser-361 is modified (phosphoserine).

This sequence belongs to the arrestin family. Homodimer; disulfide-linked. Interacts with TXN/thioredoxin through its redox-active site. Interacts with transcriptional repressors ZBTB16, ZBTB32 and HDAC1. Interacts with DDIT4. Ubiquitinated; undergoes heterotypic 'Lys-48'-/'Lys-63'-branched polyubiquitination catalyzed by ITCH and UBR5 resulting in proteasomal degradation. Deubiquitinated by USP5, leading to TXNIP stabilization.

It is found in the cytoplasm. May act as an oxidative stress mediator by inhibiting thioredoxin activity or by limiting its bioavailability. Interacts with COPS5 and restores COPS5-induced suppression of CDKN1B stability, blocking the COPS5-mediated translocation of CDKN1B from the nucleus to the cytoplasm. Functions as a transcriptional repressor, possibly by acting as a bridge molecule between transcription factors and corepressor complexes, and over-expression will induce G0/G1 cell cycle arrest. Required for the maturation of natural killer cells. Acts as a suppressor of tumor cell growth. Inhibits the proteasomal degradation of DDIT4, and thereby contributes to the inhibition of the mammalian target of rapamycin complex 1 (mTORC1). This chain is Thioredoxin-interacting protein (TXNIP), found in Pongo abelii (Sumatran orangutan).